A 195-amino-acid polypeptide reads, in one-letter code: MSSCSNVCGSRQAQAAAEGGYQRYGVRSYLHQFYEDCTASIWEYEDDFQIQRSPNRWSSVFWKVGLISGTVFVILGLTVLAVGFLVPPKIEAFGEADFVVVDTHAVQFNSALDMYKLAGAVLFCIGGTSMAGCLLMSVFVKSYSKEEKFLQQKFKERIADIKAHTQPVTKAPGPGETKIPVTLSRVQNVQPLLAT.

2 consecutive transmembrane segments (helical) span residues 66 to 86 and 120 to 140; these read LISGTVFVILGLTVLAVGFLV and AVLFCIGGTSMAGCLLMSVFV.

It belongs to the VMP family. As to expression, expressed in brain. Not detectable in other tissues tested.

The protein localises to the membrane. It is found in the cell projection. The protein resides in the neuron projection. Functionally, may play an important role in neural organelle transport, and in transduction of nerve signals or in nerve growth. May play a role in neurite extension. May play a role in memory consolidation. This is Neurensin-1 from Homo sapiens (Human).